Here is a 719-residue protein sequence, read N- to C-terminus: Ferric reductase transmembrane component 4 (719 aa).

A signal peptide spans methionine 1–alanine 18. At lysine 19–proline 156 the chain is on the extracellular side. N-linked (GlcNAc...) asparagine glycans are attached at residues asparagine 51, asparagine 80, asparagine 101, asparagine 113, asparagine 127, and asparagine 135. Residues tyrosine 157–isoleucine 177 form a helical membrane-spanning segment. Over arginine 178–arginine 228 the chain is Cytoplasmic. A helical transmembrane segment spans residues phenylalanine 229–tyrosine 249. Residues glutamine 250–histidine 267 lie on the Extracellular side of the membrane. The helical transmembrane segment at phenylalanine 268–alanine 288 threads the bilayer. Residues serine 273 to isoleucine 407 form the Ferric oxidoreductase domain. The Cytoplasmic portion of the chain corresponds to glycine 289–serine 304. Residues phenylalanine 305–alanine 325 traverse the membrane as a helical segment. Residues histidine 309 and histidine 323 each contribute to the heme site. The Extracellular portion of the chain corresponds to glycine 326–tryptophan 346. The chain crosses the membrane as a helical span at residues lysine 347–phenylalanine 367. At arginine 368 to glutamate 373 the chain is on the cytoplasmic side. A helical membrane pass occupies residues threonine 374–valine 394. Heme is bound by residues histidine 379 and histidine 393. Position 395 (threonine 395) is a topological domain, extracellular. Residues asparagine 396–valine 416 form a helical membrane-spanning segment. Residues alanine 408 to alanine 527 form the FAD-binding FR-type domain. The Cytoplasmic portion of the chain corresponds to arginine 417–tryptophan 719. Histidine 472 to aspartate 478 contacts FAD. Glycine 519–glycine 522 lines the NADP(+) pocket. Polar residues-rich tracts occupy residues glutamate 606–threonine 618 and serine 625–proline 643. Residues glutamate 606–proline 643 form a disordered region. Position 685 to 686 (cysteine 685 to glycine 686) interacts with NADP(+).

The protein belongs to the ferric reductase (FRE) family. The cofactor is FAD.

The protein localises to the cell membrane. The enzyme catalyses 2 a Fe(II)-siderophore + NADP(+) + H(+) = 2 a Fe(III)-siderophore + NADPH. Its function is as follows. Siderophore-iron reductase responsible for reducing extracellular iron prior to import. Catalyzes the reductive uptake of Fe(3+) bound to dihydroxamate rhodotorulic acid. Fe(3+) is reduced to Fe(2+), which then dissociates from the siderophore and can be imported by the high-affinity Fe(2+) transport complex in the plasma membrane. The sequence is that of Ferric reductase transmembrane component 4 (FRE4) from Saccharomyces cerevisiae (strain ATCC 204508 / S288c) (Baker's yeast).